We begin with the raw amino-acid sequence, 431 residues long: Adenylosuccinate synthetase (431 aa).

Residues 13-19 (GDEGKGK) and 41-43 (GHT) each bind GTP. The active-site Proton acceptor is the aspartate 14. Mg(2+) is bound by residues aspartate 14 and glycine 41. IMP contacts are provided by residues 14–17 (DEGK), 39–42 (NAGH), threonine 130, arginine 144, glutamine 225, threonine 240, and arginine 304. The Proton donor role is filled by histidine 42. 300 to 306 (ATTGRKR) contacts substrate. GTP is bound by residues arginine 306, 332-334 (KLD), and 415-417 (STG).

This sequence belongs to the adenylosuccinate synthetase family. In terms of assembly, homodimer. Requires Mg(2+) as cofactor.

The protein resides in the cytoplasm. The enzyme catalyses IMP + L-aspartate + GTP = N(6)-(1,2-dicarboxyethyl)-AMP + GDP + phosphate + 2 H(+). It participates in purine metabolism; AMP biosynthesis via de novo pathway; AMP from IMP: step 1/2. Its function is as follows. Plays an important role in the de novo pathway of purine nucleotide biosynthesis. Catalyzes the first committed step in the biosynthesis of AMP from IMP. The chain is Adenylosuccinate synthetase from Shewanella halifaxensis (strain HAW-EB4).